Here is a 148-residue protein sequence, read N- to C-terminus: Large ribosomal subunit protein uL13 (148 aa).

Belongs to the universal ribosomal protein uL13 family. As to quaternary structure, part of the 50S ribosomal subunit.

Functionally, this protein is one of the early assembly proteins of the 50S ribosomal subunit, although it is not seen to bind rRNA by itself. It is important during the early stages of 50S assembly. The protein is Large ribosomal subunit protein uL13 of Sulfolobus acidocaldarius (strain ATCC 33909 / DSM 639 / JCM 8929 / NBRC 15157 / NCIMB 11770).